A 690-amino-acid polypeptide reads, in one-letter code: MTSVSYRPEPGSIPTDPGVYTFRDAHERVIYVGKAKNLRARLSNYFQDLDQLHPRTRAMVQSANHVQWTVVSSELEALNLEYTWIKRFNPRFNVMYRDDKTYPMLAISVKEQIPRAFMYRGPRRKGVRYFGPYPKAWAIRETLESLTRVFPIRTCSAGVYRRHEALGRPCLLGYIDRCSAPCVGKITPEDHRALVDQFSSFLAGNTEPVLRRVRKEMEQASENLDFERAASLRDQLQAMQKSMERQAVVFSDNTDADLIAFVADELEAAVQIFHVRGGRIHGQRGWVVEREDLSEEKLVADFITQFYGETAELAKATETQVGGASGPEVDRDLARAINPAAAQDLGDLVGDVQVTPVPREILVHAMPDDADDLAAWLTSLRGSNMQIRVPQRGDKKALMTTAETNATQALAQHKLKRAGDITARSAALKELQEALWMDESPLRIECTDISHIQGTDVVASLVVFEDGLPKKADYRRYKIRDAAGDGHSDDVASIAEVVRRRFKRYQQDKSAVPAGDDAGDLLEGETELEDNSAEGTDPATEKRKFAYPPQLFIVDGGLPQVNAAQEVLDELGVNDVTLVGIAKRLEEIWVPGEEYPIIVPRNSPALYLVQNLRDEAHRFAITFHRQQRSARMRRSKLDDIPGLGPKRRKQLVKEFGSVARVKEASVEDIAALPGFGPKLAQLIHDALNAE.

The region spanning 15-94 is the GIY-YIG domain; it reads TDPGVYTFRD…IKRFNPRFNV (80 aa). The UVR domain maps to 207-242; the sequence is EPVLRRVRKEMEQASENLDFERAASLRDQLQAMQKS.

This sequence belongs to the UvrC family. In terms of assembly, interacts with UvrB in an incision complex.

The protein resides in the cytoplasm. In terms of biological role, the UvrABC repair system catalyzes the recognition and processing of DNA lesions. UvrC both incises the 5' and 3' sides of the lesion. The N-terminal half is responsible for the 3' incision and the C-terminal half is responsible for the 5' incision. The sequence is that of UvrABC system protein C from Corynebacterium jeikeium (strain K411).